We begin with the raw amino-acid sequence, 375 residues long: Tyrosine--tRNA ligase (375 aa).

L-tyrosine contacts are provided by tyrosine 37, tyrosine 168, glutamine 172, aspartate 175, and glutamine 190. The 'KMSKS' region motif lies at 251 to 255 (KMSKS). Lysine 254 lines the ATP pocket.

This sequence belongs to the class-I aminoacyl-tRNA synthetase family. TyrS type 4 subfamily. Homodimer.

The protein localises to the cytoplasm. It catalyses the reaction tRNA(Tyr) + L-tyrosine + ATP = L-tyrosyl-tRNA(Tyr) + AMP + diphosphate + H(+). Catalyzes the attachment of tyrosine to tRNA(Tyr) in a two-step reaction: tyrosine is first activated by ATP to form Tyr-AMP and then transferred to the acceptor end of tRNA(Tyr). This Pyrococcus furiosus (strain ATCC 43587 / DSM 3638 / JCM 8422 / Vc1) protein is Tyrosine--tRNA ligase.